The primary structure comprises 265 residues: Non-seed lectin (265 aa).

A signal peptide (or 23) is located at residues 1–21; sequence MALYRTKELVSLVSIMFVLLA. N-linked (GlcNAc...) asparagine glycosylation is found at asparagine 59 and asparagine 127.

This sequence belongs to the leguminous lectin family. As to quaternary structure, monomer. As to expression, most highly expressed in the epidermal layer of developing shoot tips.

The sequence is that of Non-seed lectin from Pisum sativum (Garden pea).